We begin with the raw amino-acid sequence, 195 residues long: 7-methyl-GTP pyrophosphatase (195 aa).

Catalysis depends on D70, which acts as the Proton acceptor.

The protein belongs to the Maf family. YceF subfamily. The cofactor is a divalent metal cation.

Its subcellular location is the cytoplasm. The catalysed reaction is N(7)-methyl-GTP + H2O = N(7)-methyl-GMP + diphosphate + H(+). Nucleoside triphosphate pyrophosphatase that hydrolyzes 7-methyl-GTP (m(7)GTP). May have a dual role in cell division arrest and in preventing the incorporation of modified nucleotides into cellular nucleic acids. This is 7-methyl-GTP pyrophosphatase from Shewanella sp. (strain MR-7).